Here is a 198-residue protein sequence, read N- to C-terminus: Ribonuclease HII (198 aa).

One can recognise an RNase H type-2 domain in the interval 6–195; the sequence is RRVAGVDEVG…VHHMLYQDKN (190 aa). Residues D12, E13, and D103 each coordinate a divalent metal cation.

Belongs to the RNase HII family. Mn(2+) is required as a cofactor. Requires Mg(2+) as cofactor.

The protein resides in the cytoplasm. The catalysed reaction is Endonucleolytic cleavage to 5'-phosphomonoester.. Its function is as follows. Endonuclease that specifically degrades the RNA of RNA-DNA hybrids. In Roseobacter denitrificans (strain ATCC 33942 / OCh 114) (Erythrobacter sp. (strain OCh 114)), this protein is Ribonuclease HII.